The chain runs to 579 residues: Potassium-transporting ATPase potassium-binding subunit (579 aa).

10 helical membrane-spanning segments follow: residues 1-21 (MISNSVIQIGIFLVVLMACVV), 64-84 (HYALALLGFNAMGMLLLYGLQ), 135-155 (GLTVQNFVSAATGMAVLIGLI), 178-198 (IYILLPLALVLSVTLVSQGVV), 265-285 (FLELLSILLIPAALCYTFGLM), 293-313 (WAILATMTIILLGFTVLAVSA), 398-418 (GLYGMLIFAIIAVFVAGLMVG), 435-455 (MAALIILIPCVMTLLITAIAV), 503-523 (WLGIAMLVSRFWLIVPTLAIA), and 549-569 (LLIGVVLIVGALTFIPALALG).

Belongs to the KdpA family. In terms of assembly, the system is composed of three essential subunits: KdpA, KdpB and KdpC.

Its subcellular location is the cell membrane. Its function is as follows. Part of the high-affinity ATP-driven potassium transport (or Kdp) system, which catalyzes the hydrolysis of ATP coupled with the electrogenic transport of potassium into the cytoplasm. This subunit binds the extracellular potassium ions and delivers the ions to the membrane domain of KdpB through an intramembrane tunnel. This is Potassium-transporting ATPase potassium-binding subunit from Herpetosiphon aurantiacus (strain ATCC 23779 / DSM 785 / 114-95).